A 327-amino-acid chain; its full sequence is tRNA uridine(34) hydroxylase (327 aa).

Positions 130-224 (LDEDTVVLDT…YGKDPEVQGE (95 aa)) constitute a Rhodanese domain. The active-site Cysteine persulfide intermediate is the cysteine 184.

Belongs to the TrhO family.

The catalysed reaction is uridine(34) in tRNA + AH2 + O2 = 5-hydroxyuridine(34) in tRNA + A + H2O. Its function is as follows. Catalyzes oxygen-dependent 5-hydroxyuridine (ho5U) modification at position 34 in tRNAs. In Streptococcus thermophilus (strain ATCC BAA-250 / LMG 18311), this protein is tRNA uridine(34) hydroxylase.